The sequence spans 380 residues: Probable acyl-CoA dehydrogenase YngJ (380 aa).

Residues phenylalanine 123–serine 132, tryptophan 156–threonine 158, arginine 269, and glutamine 337–glycine 341 each bind FAD. Residue glutamate 364 is the Proton acceptor of the active site. An FAD-binding site is contributed by threonine 366–glutamate 368.

Belongs to the acyl-CoA dehydrogenase family. FAD is required as a cofactor.

The enzyme catalyses a 2,3-saturated acyl-CoA + A = a 2,3-dehydroacyl-CoA + AH2. The polypeptide is Probable acyl-CoA dehydrogenase YngJ (yngJ) (Bacillus subtilis (strain 168)).